We begin with the raw amino-acid sequence, 174 residues long: FAD synthase (174 aa).

Residues 34–35 (TF), 39–42 (HPGH), Asp-119, and Tyr-147 each bind ATP.

This sequence belongs to the archaeal FAD synthase family. As to quaternary structure, homodimer. The cofactor is a divalent metal cation.

The enzyme catalyses FMN + ATP + H(+) = FAD + diphosphate. It participates in cofactor biosynthesis; FAD biosynthesis; FAD from FMN: step 1/1. Catalyzes the transfer of the AMP portion of ATP to flavin mononucleotide (FMN) to produce flavin adenine dinucleotide (FAD) coenzyme. This Methanococcus voltae (strain ATCC BAA-1334 / A3) protein is FAD synthase.